The chain runs to 203 residues: Outer-membrane lipoprotein LolB (203 aa).

A signal peptide spans 1-21 (MTGRWSPRLLAGLLAALVLSG). Residue cysteine 22 is the site of N-palmitoyl cysteine attachment. Cysteine 22 is lipidated: S-diacylglycerol cysteine.

It belongs to the LolB family. In terms of assembly, monomer.

It localises to the cell outer membrane. In terms of biological role, plays a critical role in the incorporation of lipoproteins in the outer membrane after they are released by the LolA protein. The sequence is that of Outer-membrane lipoprotein LolB from Halorhodospira halophila (strain DSM 244 / SL1) (Ectothiorhodospira halophila (strain DSM 244 / SL1)).